The primary structure comprises 790 residues: MNIMNTEQSQNSIVSRIKVFEGQTNIETSGLPKKPEITPRSLPPKPTVSSGKPSVAPKPAANRASGEWDSGTENRLKVTSKEGLTPYPPLQEAGSIPVTKPELPKKPNPGLIRSVNPEIPGRGPLAESSDSGKKVPTPAPRPLLLKKSVSSENPTYPSAPLKPVTVPPRLAGASQAKAYKSLGEGPPANPPVPVLQSKPLVDIDLISFDDDVLPTPSGNLAEESVGSEMVLDPFQLPAKTEPIKERAVQPAPTRKPTVIRIPAKPGKCLHEDPQSPPPLPAEKPIGNTFSTVSGKLSNVERTRNLESNHPGQTGGFVRVPPRLPPRPVNGKTIPTQQPPTKVPPERPPPPKLSATRRSNKKLPFNRSSSDMDLQKKQSNLATGLSKAKSQVFKNQDPVLPPRPKPGHPLYSKYMLSVPHGIANEDIVSQNPGELSCKRGDVLVMLKQTENNYLECQKGEDTGRVHLSQMKIITPLDEHLRSRPNDPSHAQKPVDSGAPHAVVLHDFPAEQVDDLNLTSGEIVYLLEKIDTDWYRGNCRNQIGIFPANYVKVIIDIPEGGNGKRECVSSHCVKGSRCVARFEYIGEQKDELSFSEGEIIILKEYVNEEWARGEVRGRTGIFPLNFVEPVEDYPTSGANVLSTKVPLKTKKEDSGSNSQVNSLPAEWCEALHSFTAETSDDLSFKRGDRIQILERLDSDWCRGRLQDREGIFPAVFVRPCPAEAKSMLAIVPKGRKAKALYDFRGENEDELSFKAGDIITELESVDDDWMSGELMGKSGIFPKNYIQFLQIS.

Disordered stretches follow at residues E21–Q196 and E241–Q374. S65 carries the phosphoserine modification. Polar residues predominate over residues N287–L296. The span at Q336–K351 shows a compositional bias: pro residues. The interaction with SH3GL1 stretch occupies residues V342–S358. Positions N365–Q374 are enriched in polar residues. S369 is modified (phosphoserine). SH3 domains are found at residues L415–E477, S495–D554, V571–D630, L661–A720, and P730–I789. Residue S762 is modified to Phosphoserine.

Interacts with ADAM12. Isoform 4 and isoform 5 (but not isoform 1 and isoform 2) interact with ADAM9, ADAM10, ADAM15 and ADAM17. Interacts with SH3GL1 SH3 domain. Interacts via SH3 3 and SH3 4 or SH3 4 and SH3 5 domains with SOS2. Probably forms a trimeric complex with SH3GL1 and SOS2. Interacts with SH3YL1. As to expression, widely expressed with highest levels in heart, skeletal muscle, kidney, liver, placenta, small intestine and lung. Expressed at low levels in colon, thymus, spleen and leukocytes.

It localises to the cytoplasm. The protein localises to the nucleus. Functionally, may play a role in regulating A disintegrin and metalloproteases (ADAMs) in the signaling of EGFR-ligand shedding. May be involved in suppression of Ras-induced cellular transformation and Ras-mediated activation of ELK1. Plays a role in the regulation of cell morphology and cytoskeletal organization. In Homo sapiens (Human), this protein is SH3 domain-containing protein 19 (SH3D19).